Reading from the N-terminus, the 2256-residue chain is GON-4-like protein (2256 aa).

Disordered stretches follow at residues Met-1–Gly-56, Pro-105–Pro-213, and Leu-227–Asp-266. A compositionally biased stretch (basic and acidic residues) spans Glu-23–Thr-35. Over residues Asp-40–Asp-53 the composition is skewed to polar residues. Residues Thr-141–Gly-176 show a composition bias toward basic and acidic residues. Residues Arg-242–Asp-254 show a composition bias toward basic residues. Residue Ser-346 is modified to Phosphoserine. A compositionally biased stretch (acidic residues) spans Glu-366–Val-395. 3 disordered regions span residues Glu-366 to Glu-428, Ser-441 to Asp-460, and Asp-545 to Asp-573. Positions Asp-545 to Thr-571 are enriched in acidic residues. The tract at residues Glu-609–Phe-1363 is required for interaction with YY1, SIN3A and HDAC1, and transcriptional repression activity. The residue at position 783 (Ser-783) is a Phosphoserine. Composition is skewed to low complexity over residues Thr-947–Ser-959 and Pro-1094–Leu-1115. 4 disordered regions span residues Thr-947–Pro-969, Ala-1078–Val-1141, Ala-1241–Ser-1288, and Ser-1360–Arg-1620. A compositionally biased stretch (basic residues) spans Lys-1119–Ala-1135. Basic and acidic residues predominate over residues Pro-1364–Gln-1386. Composition is skewed to polar residues over residues Glu-1387–Thr-1401 and Leu-1429–Asn-1444. Position 1445 is a phosphoserine (Ser-1445). Acidic residues predominate over residues Gly-1475–Leu-1495. A compositionally biased stretch (low complexity) spans Ser-1496–Gln-1510. Residues Gly-1529–Gly-1553 are compositionally biased toward acidic residues. Positions Arg-1606–Arg-1620 are enriched in basic residues. PAH domains are found at residues Glu-1644–Glu-1716 and Glu-1726–Leu-1797. 2 disordered regions span residues Val-1831–Ser-1886 and Leu-1909–Pro-1966. Basic and acidic residues predominate over residues Glu-1851–Lys-1868. Ser-1921 and Ser-1994 each carry phosphoserine. Disordered stretches follow at residues Pro-2050–Asp-2078 and Ile-2110–Lys-2148. Residues Arg-2111 to Glu-2129 are compositionally biased toward low complexity. The region spanning Ser-2163–Met-2216 is the Myb-like domain. The segment at Cys-2223–Glu-2256 is disordered.

In terms of assembly, found in a complex with YY1, SIN3A and HDAC1.

The protein localises to the nucleus. In terms of biological role, has transcriptional repressor activity, probably as part of a complex with YY1, SIN3A and HDAC1. Required for B cell lymphopoiesis. The protein is GON-4-like protein (Gon4l) of Rattus norvegicus (Rat).